The primary structure comprises 318 residues: Mitochondrial coenzyme A transporter SLC25A42 (318 aa).

Solcar repeat units follow at residues 31–117, 129–214, and 224–312; these read RQVL…YKRI, LPPW…LKSL, and PYPF…MQIL. A run of 6 helical transmembrane segments spans residues 33-53, 89-109, 135-155, 186-206, 230-250, and 293-313; these read VLSS…AVAP, LWRG…IQFS, LLAG…LDLV, LYFG…LSFF, MVFG…LDVV, and LKGP…QILL.

The protein belongs to the mitochondrial carrier (TC 2.A.29) family.

Its subcellular location is the mitochondrion inner membrane. It catalyses the reaction ADP(out) + CoA(in) = ADP(in) + CoA(out). The enzyme catalyses 3'-dephospho-CoA(in) + ADP(out) = 3'-dephospho-CoA(out) + ADP(in). It carries out the reaction adenosine 3',5'-bisphosphate(in) + ADP(out) = adenosine 3',5'-bisphosphate(out) + ADP(in). The catalysed reaction is AMP(in) + ADP(out) = AMP(out) + ADP(in). It catalyses the reaction dADP(in) + ADP(out) = dADP(out) + ADP(in). The enzyme catalyses ADP(in) + ATP(out) = ADP(out) + ATP(in). In terms of biological role, mitochondrial carrier mediating the transport of coenzyme A (CoA) in mitochondria in exchange for intramitochondrial (deoxy)adenine nucleotides and adenosine 3',5'-diphosphate. This Mus musculus (Mouse) protein is Mitochondrial coenzyme A transporter SLC25A42 (Slc25a42).